The primary structure comprises 332 residues: Glyceraldehyde-3-phosphate dehydrogenase 1 (332 aa).

NAD(+)-binding positions include 11 to 12, Asp33, and Arg78; that span reads RI. D-glyceraldehyde 3-phosphate-binding positions include 149 to 151, Thr180, 209 to 210, and Arg232; these read SCT and TG. Residue Cys150 is the Nucleophile of the active site. Residue Asn314 participates in NAD(+) binding.

The protein belongs to the glyceraldehyde-3-phosphate dehydrogenase family. In terms of assembly, homotetramer.

It localises to the cytoplasm. The enzyme catalyses D-glyceraldehyde 3-phosphate + phosphate + NAD(+) = (2R)-3-phospho-glyceroyl phosphate + NADH + H(+). Its pathway is carbohydrate degradation; glycolysis; pyruvate from D-glyceraldehyde 3-phosphate: step 1/5. The protein is Glyceraldehyde-3-phosphate dehydrogenase 1 (GPD1) of Candida glabrata (strain ATCC 2001 / BCRC 20586 / JCM 3761 / NBRC 0622 / NRRL Y-65 / CBS 138) (Yeast).